Reading from the N-terminus, the 558-residue chain is uncharacterized protein (558 aa).

The segment at 396-420 (SSITDNDTDNDSGATESQQTDSEND) is disordered. The segment covering 407-416 (SGATESQQTD) has biased composition (polar residues).

This sequence belongs to the chlamydial CPn_0065/CT_288/TC_0561 family.

This is an uncharacterized protein from Chlamydia muridarum (strain MoPn / Nigg).